The chain runs to 615 residues: MCSEARLARRLRDALREEEPWAVEELLRCGADPNLVLEDGAAAVHLAAGARHPRGLRCLGALLRQGGDPNARSVEALTPLHVAAAWGCRRGLELLLSQGADPALRDQDGLRPLDLALQQGHLECARVLQDLDTRTRTRTRIGAETQEPEPAPGTPGLSGPTDETLDSIALQKQPCRGDNRDIGLEADPGPPSLPVPLETVDKHGSSASPPGHWDYSSDASFVTAVEVSGAEDPASDTPPWAGSLPPTRQGLLHVVHANQRVPRSQGTEAELNARLQALTLTPPNAAGFQSSPSSMPLLDRSPAHSPPRTPTPGASDCHCLWEHQTSIDSDMATLWLTEDEASSTGGREPVGPCRHLPVSTVSDLELLKGLRALGENPHPITPFTRQLYHQQLEEAQIAPGPEFSGHSLELAAALRTGCIPDVQADEDALAQQFEQPDPARRWREGVVKSSFTYLLLDPRETQDLPARAFSLTPAERLQTFIRAIFYVGKGTRARPYVHLWEALGHHGRSRKQPHQACPKVRQILDIWASGCGVVSLHCFQHVVAVEAYTREACIVEALGIQTLTNQKQGHCYGVVAGWPPARRRRLGVHLLHRALLVFLAEGERQLHPQDIQARG.

ANK repeat units lie at residues 39-71 (DGAA…DPNA), 75-104 (EALT…DPAL), and 108-137 (DGLR…RTRT). The interval 138–210 (RTRIGAETQE…DKHGSSASPP (73 aa)) is disordered. The Nuclear export signal signature appears at 271 to 280 (LNARLQALTL). Positions 283 to 294 (PNAAGFQSSPSS) are enriched in polar residues. Residues 283 to 315 (PNAAGFQSSPSSMPLLDRSPAHSPPRTPTPGAS) form a disordered region. In terms of domain architecture, LEM spans 355–399 (HLPVSTVSDLELLKGLRALGENPHPITPFTRQLYHQQLEEAQIAP). Residues 448–566 (KSSFTYLLLD…ALGIQTLTNQ (119 aa)) enclose the GIY-YIG domain. Residues 579–586 (PPARRRRL) carry the Nuclear localization signal motif.

As to quaternary structure, interacts (via LEM domain) with BANF1; the interaction may favor BANF1 dimerization. In terms of tissue distribution, expression is predominant in adult bone marrow.

The protein localises to the cytoplasm. Its subcellular location is the nucleus. In terms of biological role, endonuclease that probably plays a role in the DNA damage response and DNA repair. This is Ankyrin repeat and LEM domain-containing protein 1 (ANKLE1) from Homo sapiens (Human).